The primary structure comprises 1137 residues: Dendrite extension defective protein 1 (1137 aa).

An N-terminal signal peptide occupies residues 1–41 (MLAHTHRINKCLYGQNQMRNRHALLGALPPIFLLLLPLISC). Residues 43 to 1005 (KFDPERIAAR…HAEEQSPRLA (963 aa)) are Extracellular-facing. The region spanning 163–302 (PFWNRNDLRN…GEWMFELSEL (140 aa)) is the NIDO 1 domain. N-linked (GlcNAc...) asparagine glycosylation is found at Asn-240 and Asn-416. Residues 409–450 (DVDECKTNSTICHKNAICTNTPGRYFCMCKEGFSGDGQNDCS) enclose the EGF-like; calcium-binding domain. Intrachain disulfides connect Cys-413–Cys-426, Cys-420–Cys-435, and Cys-437–Cys-449. Positions 519–659 (PFFGPIDLSR…GTWLYRIDKA (141 aa)) constitute an NIDO 2 domain. N-linked (GlcNAc...) asparagine glycosylation occurs at Asn-571. Residues 738–749 (IGNQQRQQTTKA) are compositionally biased toward polar residues. Disordered regions lie at residues 738 to 765 (IGNQQRQQTTKAVTRPRPNFSSTPHRPI), 795 to 856 (FRPN…PFEA), 878 to 897 (QTTKKQRPELSVTPQPEDLS), 906 to 933 (TEEDEEEAEISTETTTEMSSTTTTTKAH), and 978 to 998 (NSQPPKQRNDNQPTVNVGHAE). An N-linked (GlcNAc...) asparagine glycan is attached at Asn-756. Residues 798–809 (NQRNGVQKSTQR) show a composition bias toward polar residues. Residues 819–833 (PLKEEATTSVPREKT) are compositionally biased toward basic and acidic residues. Residues 906–915 (TEEDEEEAEI) show a composition bias toward acidic residues. Over residues 916–933 (STETTTEMSSTTTTTKAH) the composition is skewed to low complexity. Polar residues predominate over residues 978-992 (NSQPPKQRNDNQPTV). The chain crosses the membrane as a helical span at residues 1006-1026 (ILLPVMIILAWLVILVCIGAV). Topologically, residues 1027–1037 (VCCKRRNSRES) are cytoplasmic. Residues 1106–1125 (ARLSTQERQSPPSFVNNGYT) form a disordered region.

Post-translationally, may be proteolytically cleaved and secreted.

Its subcellular location is the membrane. The protein resides in the cell projection. The protein localises to the dendrite. It is found in the secreted. Along with dyf-7, enables neurite growth and maintenance by anchoring amphid dendritic tips during neuron cell body migration in embryonic and larval development. Promotes seam cell remodeling during the dauer phase. Plays a role in positively regulating locomotion during the dauer phase. In Caenorhabditis elegans, this protein is Dendrite extension defective protein 1.